The chain runs to 350 residues: Galactokinase (350 aa).

14 to 17 (EHTD) contacts substrate. ATP contacts are provided by residues Ser-46 and 96–102 (GAGLSSS). Positions 102 and 134 each coordinate Mg(2+). Residue Asp-146 is the Proton acceptor of the active site. Tyr-196 is a binding site for substrate.

Belongs to the GHMP kinase family. GalK subfamily.

Its subcellular location is the cytoplasm. It catalyses the reaction alpha-D-galactose + ATP = alpha-D-galactose 1-phosphate + ADP + H(+). The protein operates within carbohydrate metabolism; galactose metabolism. Functionally, catalyzes the transfer of the gamma-phosphate of ATP to D-galactose to form alpha-D-galactose-1-phosphate (Gal-1-P). The polypeptide is Galactokinase (Thermotoga petrophila (strain ATCC BAA-488 / DSM 13995 / JCM 10881 / RKU-1)).